The chain runs to 434 residues: Chaperone SurA (434 aa).

The signal sequence occupies residues Met1–Ala22. PpiC domains are found at residues Asp173 to Asp274 and Ile283 to Glu383.

It localises to the periplasm. The enzyme catalyses [protein]-peptidylproline (omega=180) = [protein]-peptidylproline (omega=0). In terms of biological role, chaperone involved in the correct folding and assembly of outer membrane proteins. Recognizes specific patterns of aromatic residues and the orientation of their side chains, which are found more frequently in integral outer membrane proteins. May act in both early periplasmic and late outer membrane-associated steps of protein maturation. The chain is Chaperone SurA from Shewanella sp. (strain MR-4).